The following is a 430-amino-acid chain: Mannosylglucosylglycerate synthase (430 aa).

It belongs to the glycosyltransferase group 1 family. A divalent metal cation is required as a cofactor.

The enzyme catalyses (2R)-2-O-(alpha-D-glucopyranosyl)-glycerate + GDP-alpha-D-mannose = (2R)-2-O-[alpha-D-mannopyranosyl-(1-&gt;2)-alpha-D-glucopyranosyl]-glycerate + GDP + H(+). Functionally, involved in the biosynthesis of the compatible solute mannosylglucosylglycerate through a nonphosphorylating pathway. Catalyzes the synthesis of mannosylglucosylglycerate (MGG) from glucosylglycerate (GG) and GDP-mannose. This Petrotoga mobilis (strain DSM 10674 / SJ95) protein is Mannosylglucosylglycerate synthase.